Reading from the N-terminus, the 525-residue chain is Rho guanine nucleotide exchange factor gef3 (525 aa).

In terms of domain architecture, DH spans Ala-72–Leu-268.

It is found in the cytoplasm. In terms of biological role, has a role in the control of cell polarity and cytokinesis. Involved in bipolar growth and septum formation. The polypeptide is Rho guanine nucleotide exchange factor gef3 (gef3) (Schizosaccharomyces pombe (strain 972 / ATCC 24843) (Fission yeast)).